The primary structure comprises 1447 residues: Adhesion G protein-coupled receptor L3 (1447 aa).

Residues 1 to 19 (MWPSQLLIFMMLLAPIIHA) form the signal peptide. Topologically, residues 20 to 862 (FSRAPIPMAV…VKHSDAVHDL (843 aa)) are extracellular. In terms of domain architecture, SUEL-type lectin spans 35-124 (SCESYPIELR…KYLEVQYECV (90 aa)). 5 disulfides stabilise this stretch: Cys36-Cys66, Cys45-Cys123, Cys78-Cys110, Cys91-Cys97, and Cys135-Cys317. N-linked (GlcNAc...) asparagine glycosylation is present at Asn93. The Olfactomedin-like domain occupies 134–393 (LCPGLLKGVY…VVKYSLDFGP (260 aa)). Positions 249-279 (YHDTSPYRWGGKSDIDLAVDENGLWVIYATE) are interaction with FLRT3. Asp264, Asn312, Ala313, and Val367 together coordinate Ca(2+). Residues 426–473 (DISTTGPLGMGSTTTSTTLRTTTLSPGRSTTPSVSGRRNRSTSTPSPA) form a disordered region. Residues 428 to 458 (STTGPLGMGSTTTSTTLRTTTLSPGRSTTPS) are compositionally biased toward low complexity. N-linked (GlcNAc...) asparagine glycans are attached at residues Asn464, Asn549, Asn746, Asn759, Asn804, and Asn830. The GAIN-B domain maps to 675–854 (DIVRENTDNI…AVLMAHVEVK (180 aa)). Disulfide bonds link Cys805/Cys836 and Cys824/Cys838. Positions 805 to 854 (CSFWSYSKRTMTGYWSTQGCRLLTTNKTHTTCSCNHLTNFAVLMAHVEVK) are GPS. The segment at 842–855 (TNFAVLMAHVEVKH) is stachel. The helical transmembrane segment at 863 to 888 (LLDVITWVGILLSLVCLLICIFTFCF) threads the bilayer. At 889–896 (FRGLQSDR) the chain is on the cytoplasmic side. The chain crosses the membrane as a helical span at residues 897-918 (NTIHKNLCISLFVAELLFLIGI). Over 919–926 (NRTDQPIA) the chain is Extracellular. The chain crosses the membrane as a helical span at residues 927 to 950 (CAVFAALLHFFFLAAFTWMFLEGV). Cys927 and Cys999 are disulfide-bonded. The Cytoplasmic portion of the chain corresponds to 951–967 (QLYIMLVEVFESEHSRR). A helical transmembrane segment spans residues 968–990 (KYFYLVGYGMPALIVAVSAAVDY). The Extracellular segment spans residues 991–1005 (RSYGTDKVCWLRLDT). Residues 1006–1027 (YFIWSFIGPATLIIMLNVIFLG) form a helical membrane-spanning segment. Residues 1028 to 1053 (IALYKMFHHTAILKPESGCLDNIKSW) are Cytoplasmic-facing. Residues 1054–1073 (VIGAIALLCLLGLTWAFGLM) form a helical membrane-spanning segment. Residues 1074-1078 (YINES) lie on the Extracellular side of the membrane. Asn1076 carries an N-linked (GlcNAc...) asparagine glycan. A helical transmembrane segment spans residues 1079 to 1104 (TVIMAYLFTIFNSLQGMFIFIFHCVL). Topologically, residues 1105–1447 (QKKVRKEYGK…KGPAHLVTSL (343 aa)) are cytoplasmic. A disordered region spans residues 1123–1147 (GKSTESSIGSGKTSGSRTPGRYSTG). Position 1164 is a phosphoserine (Ser1164). Residues 1423-1447 (IVPPNKDGTPPEGSSKGPAHLVTSL) are disordered. The PDZ-binding motif lies at 1442–1447 (HLVTSL).

The protein belongs to the G-protein coupled receptor 2 family. LN-TM7 subfamily. In terms of assembly, heterodimer of 2 chains generated by proteolytic processing; the large extracellular N-terminal fragment and the membrane-bound C-terminal fragment predominantly remain associated and non-covalently linked. Interacts (via olfactomedin-like domain) with FLRT1 (via extracellular domain). Interacts (via olfactomedin-like domain) with FLRT2 (via extracellular domain). Interacts (via olfactomedin-like domain) with FLRT3 (via extracellular domain); the interaction is direct. Interacts (via extracellular domain) with TENM1. Interacts (via extracellular domain) with TENM2. Interacts (via extracellular domain) with TENM3. Identified in a complex with FLRT3 and UNC5B; does not interact with UNC5B by itself. Identified in a complex with FLRT3 and UNC5D; does not interact with UNC5D by itself. As to quaternary structure, interacts (via PDZ-binding motif) with SHANK3. Interacts (via PDZ-binding motif) with DLG4. Post-translationally, autoproteolytically processed at the GPS region of the GAIN-B domain; this cleavage modulates receptor activity.

It is found in the cell membrane. The protein localises to the postsynaptic cell membrane. It localises to the cell projection. Its subcellular location is the axon. The protein resides in the cell junction. Forms a heterodimer of 2 chains generated by proteolytic processing that remain associated through non-covalent interactions mediated by the GAIN-B domain. In the inactivated receptor, the Stachel sequence (also named stalk) is embedded in the GAIN-B domain, where it adopts a beta-strand conformation. On activation, the Stachel moves into the 7 transmembrane region and adopts a twisted hook-shaped configuration that forms contacts within the receptor, leading to coupling of a G-alpha protein, which activates signaling. The cleaved GAIN-B and N-terminal domains can then dissociate from the rest of the receptor. Its function is as follows. Orphan adhesion G-protein coupled receptor (aGPCR), which mediates synapse specificity. Ligand binding causes a conformation change that triggers signaling via guanine nucleotide-binding proteins (G proteins) and modulates the activity of downstream effectors. ADGRL3 is coupled with different classes of G alpha proteins, such as G(12)/G(13), G(s), G(i) or G(q), depending on the context. Coupling to G(12)/G(13) G proteins, which mediates the activation Rho small GTPases is the most efficient. Following G-protein coupled receptor activation, associates with cell adhesion molecules that are expressed at the surface of adjacent cells to direct synapse specificity. Specifically mediates the establishment of Schaffer-collateral synapses formed by CA3-region axons on CA1-region pyramidal neurons in the hippocampus. Localizes to postsynaptic spines in excitatory synapses in the S.oriens and S.radiatum and interacts with presynaptic cell adhesion molecules FLRT3 and TENM2, promoting synapse formation. Plays a role in the development of glutamatergic synapses in the cortex. Important in determining the connectivity rates between the principal neurons in the cortex. Orphan adhesion G-protein coupled receptor (aGPCR), which mediates synapse specificity. Ligand binding causes a conformation change that triggers signaling via guanine nucleotide-binding proteins (G proteins) and modulates the activity of downstream effectors, such as adenylate cyclase. Isoform 1 is specifically coupled to G(s) G proteins and mediates activation of adenylate cyclase activity. Following G-protein coupled receptor activation, undergoes liquid-liquid phase transition, associates with (1) cell adhesion molecules that are expressed at the surface of adjacent cells, as well as (2) PDZ-containing proteins, such as SHANK3 and DLG4, in the cytoplasm to direct synapse formation. The protein is Adhesion G protein-coupled receptor L3 of Homo sapiens (Human).